We begin with the raw amino-acid sequence, 270 residues long: Putative pyruvate, phosphate dikinase regulatory protein (270 aa).

Residue 148–155 (GVSRTSKT) coordinates ADP.

Belongs to the pyruvate, phosphate/water dikinase regulatory protein family. PDRP subfamily.

It carries out the reaction N(tele)-phospho-L-histidyl/L-threonyl-[pyruvate, phosphate dikinase] + ADP = N(tele)-phospho-L-histidyl/O-phospho-L-threonyl-[pyruvate, phosphate dikinase] + AMP + H(+). The enzyme catalyses N(tele)-phospho-L-histidyl/O-phospho-L-threonyl-[pyruvate, phosphate dikinase] + phosphate + H(+) = N(tele)-phospho-L-histidyl/L-threonyl-[pyruvate, phosphate dikinase] + diphosphate. Functionally, bifunctional serine/threonine kinase and phosphorylase involved in the regulation of the pyruvate, phosphate dikinase (PPDK) by catalyzing its phosphorylation/dephosphorylation. The polypeptide is Putative pyruvate, phosphate dikinase regulatory protein (Bacillus cytotoxicus (strain DSM 22905 / CIP 110041 / 391-98 / NVH 391-98)).